The primary structure comprises 73 residues: uncharacterized protein (73 aa).

The protein belongs to the asfivirus DP63R family.

This is an uncharacterized protein from African swine fever virus (isolate Tick/Malawi/Lil 20-1/1983) (ASFV).